A 477-amino-acid polypeptide reads, in one-letter code: MAGKTLYDKLWDAHEVKRRDDGSSLIYIDRHIIHEVTSPQAFEGLRLASRKPWRIDTNIATPDHNVPTTPERKGGIEAIVDQVSRLQVQTLDENCDEYGIVEFKMNDERQGIVHVISPEQGATLPGMTVVCGDSHTSTHGAFGALAHGIGTSEVEHVLATQCLVAKKMKNMLVRVEGELPAGVTAKDIVLAVIGKIGTAGGNGHAMEFAGSAIRELSMEGRMTICNMSIEAGARVGLVAVDDTTVNYVEGRPYAPKGEQWKQAVASWKGLVSDADAVFDTLVELDAAQIKPQVSWGTSPEMVLAVDQCVPDPAAEADLIKRGSIERALKYMGLSANQAITDIKLDRVFIGSCTNSRIEDLRAAAEIAKGRKVAANVKQALVVPGSGLVKAQAEREGLDKIFLEAGFEWREPGCSMCLAMNPDRLESGEHCASTSNRNFEGRQGAGGRTHLVSPAMAAAAAVTGHFIDVRELIQGSAA.

Cysteine 352, cysteine 413, and cysteine 416 together coordinate [4Fe-4S] cluster.

Belongs to the aconitase/IPM isomerase family. LeuC type 1 subfamily. As to quaternary structure, heterodimer of LeuC and LeuD. [4Fe-4S] cluster serves as cofactor.

The enzyme catalyses (2R,3S)-3-isopropylmalate = (2S)-2-isopropylmalate. The protein operates within amino-acid biosynthesis; L-leucine biosynthesis; L-leucine from 3-methyl-2-oxobutanoate: step 2/4. Catalyzes the isomerization between 2-isopropylmalate and 3-isopropylmalate, via the formation of 2-isopropylmaleate. The polypeptide is 3-isopropylmalate dehydratase large subunit (Pseudomonas entomophila (strain L48)).